The sequence spans 300 residues: Protoheme IX farnesyltransferase (300 aa).

8 helical membrane passes run 24–44, 46–66, 94–114, 118–138, 146–166, 172–192, 224–244, and 278–298; these read VTQL…PGMV, WHVL…AFAI, PQIL…LYTF, LTMW…TLLL, IVIG…AVTG, AWIL…VLAL, VILF…VVYL, and IVYL…RPLL.

The protein belongs to the UbiA prenyltransferase family. Protoheme IX farnesyltransferase subfamily.

Its subcellular location is the cell inner membrane. The catalysed reaction is heme b + (2E,6E)-farnesyl diphosphate + H2O = Fe(II)-heme o + diphosphate. The protein operates within porphyrin-containing compound metabolism; heme O biosynthesis; heme O from protoheme: step 1/1. In terms of biological role, converts heme B (protoheme IX) to heme O by substitution of the vinyl group on carbon 2 of heme B porphyrin ring with a hydroxyethyl farnesyl side group. The chain is Protoheme IX farnesyltransferase from Burkholderia ambifaria (strain ATCC BAA-244 / DSM 16087 / CCUG 44356 / LMG 19182 / AMMD) (Burkholderia cepacia (strain AMMD)).